The primary structure comprises 170 residues: Bifunctional protein PyrR (170 aa).

The PRPP-binding signature appears at 90 to 102; that stretch reads LVLVDDVLMSGRT.

The protein belongs to the purine/pyrimidine phosphoribosyltransferase family. PyrR subfamily.

It carries out the reaction UMP + diphosphate = 5-phospho-alpha-D-ribose 1-diphosphate + uracil. Functionally, regulates the transcription of the pyrimidine nucleotide (pyr) operon in response to exogenous pyrimidines. In terms of biological role, also displays a weak uracil phosphoribosyltransferase activity which is not physiologically significant. In Pseudomonas aeruginosa (strain LESB58), this protein is Bifunctional protein PyrR.